The chain runs to 583 residues: Kelch-like protein 38 (583 aa).

The BTB domain maps to Thr34–Met101. Residues Cys136–Ala237 form the BACK domain. 6 Kelch repeats span residues Thr285–Ser332, Ile333–His385, Phe386–Gln433, Ile435–Asp481, Lys482–Asn523, and Leu525–Cys575.

The chain is Kelch-like protein 38 (klhl38) from Danio rerio (Zebrafish).